The following is a 295-amino-acid chain: Tetrahydromethanopterin S-methyltransferase subunit E (295 aa).

A run of 7 helical transmembrane segments spans residues 4 to 24 (MITG…AGAA), 60 to 80 (GEPV…FVLM), 87 to 107 (VIMA…TYAV), 140 to 160 (GFIV…PIPG), 161 to 181 (FAHP…IGAI), 234 to 254 (YGGP…FWNT), and 255 to 275 (IVFG…LLII).

It belongs to the MtrE family. In terms of assembly, the complex is composed of 8 subunits; MtrA, MtrB, MtrC, MtrD, MtrE, MtrF, MtrG and MtrH.

The protein resides in the cell membrane. It catalyses the reaction 5-methyl-5,6,7,8-tetrahydromethanopterin + coenzyme M + 2 Na(+)(in) = 5,6,7,8-tetrahydromethanopterin + methyl-coenzyme M + 2 Na(+)(out). Its pathway is one-carbon metabolism; methanogenesis from CO(2); methyl-coenzyme M from 5,10-methylene-5,6,7,8-tetrahydromethanopterin: step 2/2. Functionally, part of a complex that catalyzes the formation of methyl-coenzyme M and tetrahydromethanopterin from coenzyme M and methyl-tetrahydromethanopterin. This is an energy-conserving, sodium-ion translocating step. The protein is Tetrahydromethanopterin S-methyltransferase subunit E of Methanothermobacter marburgensis (strain ATCC BAA-927 / DSM 2133 / JCM 14651 / NBRC 100331 / OCM 82 / Marburg) (Methanobacterium thermoautotrophicum).